We begin with the raw amino-acid sequence, 117 residues long: Small ribosomal subunit protein bS6 (117 aa).

A disordered region spans residues 92 to 117 (KVDEHPEGPSIQMQKREERDNRRERR). Positions 105–117 (QKREERDNRRERR) are enriched in basic and acidic residues.

The protein belongs to the bacterial ribosomal protein bS6 family.

In terms of biological role, binds together with bS18 to 16S ribosomal RNA. The sequence is that of Small ribosomal subunit protein bS6 from Dinoroseobacter shibae (strain DSM 16493 / NCIMB 14021 / DFL 12).